The sequence spans 188 residues: MEEKNHIDHYANALYSIWLELDKKNKIIFTSSAKDIYFSLKNNYEMVHIIDSNIISKEEKTKILNKIFFDLSKSISNIYLKNFLFVLNDNNFFKRILEIFISFFQKLDEHQNFLFIRIYSPFVVEKKLLEKIEHLFSIKTGKRVRYENIIDKSLIGGMKIMFGNDVYDYSIKGKIDQIKWNIENNKEV.

The protein belongs to the ATPase delta chain family. As to quaternary structure, F-type ATPases have 2 components, F(1) - the catalytic core - and F(0) - the membrane proton channel. F(1) has five subunits: alpha(3), beta(3), gamma(1), delta(1), epsilon(1). F(0) has three main subunits: a(1), b(2) and c(10-14). The alpha and beta chains form an alternating ring which encloses part of the gamma chain. F(1) is attached to F(0) by a central stalk formed by the gamma and epsilon chains, while a peripheral stalk is formed by the delta and b chains.

It localises to the cell membrane. F(1)F(0) ATP synthase produces ATP from ADP in the presence of a proton or sodium gradient. F-type ATPases consist of two structural domains, F(1) containing the extramembraneous catalytic core and F(0) containing the membrane proton channel, linked together by a central stalk and a peripheral stalk. During catalysis, ATP synthesis in the catalytic domain of F(1) is coupled via a rotary mechanism of the central stalk subunits to proton translocation. Its function is as follows. This protein is part of the stalk that links CF(0) to CF(1). It either transmits conformational changes from CF(0) to CF(1) or is implicated in proton conduction. This chain is ATP synthase subunit delta, found in Malacoplasma penetrans (strain HF-2) (Mycoplasma penetrans).